We begin with the raw amino-acid sequence, 1375 residues long: DNA-directed RNA polymerase subunit beta' (1375 aa).

The segment at 1-158 (MAKNEVLSLP…RVNKIIQPIR (158 aa)) is unknown. Residues 159–1353 (KTYGSKAFTH…GGLIPAGTGI (1195 aa)) form a DNA-directed RNA polymerase subunit beta' region. Residues Cys-219, Cys-221, Cys-233, and Cys-236 each coordinate Zn(2+). The Mg(2+) site is built by Asp-607, Asp-609, and Asp-611.

The protein belongs to the RNA polymerase beta' chain family. The RNAP catalytic core consists of 2 alpha, 1 beta, 1 beta' and 1 omega subunit. When a sigma factor is associated with the core the holoenzyme is formed, which can initiate transcription. Mg(2+) serves as cofactor. Requires Zn(2+) as cofactor.

The catalysed reaction is RNA(n) + a ribonucleoside 5'-triphosphate = RNA(n+1) + diphosphate. In terms of biological role, DNA-dependent RNA polymerase catalyzes the transcription of DNA into RNA using the four ribonucleoside triphosphates as substrates. The polypeptide is DNA-directed RNA polymerase subunit beta' (Acholeplasma laidlawii (strain PG-8A)).